The chain runs to 238 residues: Pyridoxine 5'-phosphate synthase (238 aa).

Asn-7 and Arg-18 together coordinate 3-amino-2-oxopropyl phosphate. Residue His-43 is the Proton acceptor of the active site. 1-deoxy-D-xylulose 5-phosphate contacts are provided by Arg-45 and His-50. Glu-70 functions as the Proton acceptor in the catalytic mechanism. A 1-deoxy-D-xylulose 5-phosphate-binding site is contributed by Thr-100. The active-site Proton donor is the His-190. Residues Asp-191 and 213-214 contribute to the 3-amino-2-oxopropyl phosphate site; that span reads GH.

It belongs to the PNP synthase family. As to quaternary structure, homooctamer; tetramer of dimers.

It is found in the cytoplasm. It carries out the reaction 3-amino-2-oxopropyl phosphate + 1-deoxy-D-xylulose 5-phosphate = pyridoxine 5'-phosphate + phosphate + 2 H2O + H(+). The protein operates within cofactor biosynthesis; pyridoxine 5'-phosphate biosynthesis; pyridoxine 5'-phosphate from D-erythrose 4-phosphate: step 5/5. Catalyzes the complicated ring closure reaction between the two acyclic compounds 1-deoxy-D-xylulose-5-phosphate (DXP) and 3-amino-2-oxopropyl phosphate (1-amino-acetone-3-phosphate or AAP) to form pyridoxine 5'-phosphate (PNP) and inorganic phosphate. The sequence is that of Pyridoxine 5'-phosphate synthase from Phocaeicola vulgatus (strain ATCC 8482 / DSM 1447 / JCM 5826 / CCUG 4940 / NBRC 14291 / NCTC 11154) (Bacteroides vulgatus).